The chain runs to 295 residues: Pantothenate synthetase (295 aa).

The active-site Proton donor is histidine 37. Glutamine 61 provides a ligand contact to (R)-pantoate. Glutamine 61 is a beta-alanine binding site. 154 to 157 lines the ATP pocket; that stretch reads GRKD. Residue glutamine 160 participates in (R)-pantoate binding. Residues valine 183 and 191–194 each bind ATP; that span reads QSSR.

The protein belongs to the pantothenate synthetase family. In terms of assembly, homodimer.

The protein localises to the cytoplasm. The catalysed reaction is (R)-pantoate + beta-alanine + ATP = (R)-pantothenate + AMP + diphosphate + H(+). Its pathway is cofactor biosynthesis; (R)-pantothenate biosynthesis; (R)-pantothenate from (R)-pantoate and beta-alanine: step 1/1. In terms of biological role, catalyzes the condensation of pantoate with beta-alanine in an ATP-dependent reaction via a pantoyl-adenylate intermediate. The chain is Pantothenate synthetase from Salinibacter ruber (strain DSM 13855 / M31).